Consider the following 78-residue polypeptide: U-scoloptoxin(15)-Ssm2a (78 aa).

The first 23 residues, 1–23 (MEKKIIFLCFFVSLLTLPEFISS), serve as a signal peptide directing secretion. Positions 34 to 37 (PEKK) are important for inhibition of KCNQ4. 2 cysteine pairs are disulfide-bonded: Cys44-Cys70 and Cys48-Cys72.

Belongs to the SLPTX(15) family. As to expression, expressed by the venom gland.

It localises to the secreted. The chain is U-scoloptoxin(15)-Ssm2a from Scolopendra mutilans (Chinese red-headed centipede).